The following is a 709-amino-acid chain: Solute carrier organic anion transporter family member 2B1 (709 aa).

Positions 1–38 (MGPRIGPAGEVPQVPDKETKATMGTENTPGGKASPDPQ) are disordered. At 1–49 (MGPRIGPAGEVPQVPDKETKATMGTENTPGGKASPDPQDVRPSVFHNIK) the chain is on the cytoplasmic side. Serine 34 is subject to Phosphoserine. The helical transmembrane segment at 50–69 (LFVLCHSLLQLAQLMISGYL) threads the bilayer. Residues 51-69 (FVLCHSLLQLAQLMISGYL) form a required for E1S and taurocholate transport; required for transporter stability region. Topologically, residues 70 to 88 (KSSISTVEKRFGLSSQTSG) are extracellular. The chain crosses the membrane as a helical span at residues 89–109 (LLASFNEVGNTALIVFVSYFG). The Cytoplasmic portion of the chain corresponds to 110–115 (SRVHRP). The helical transmembrane segment at 116–140 (RMIGYGAILVALAGLLMTLPHFISE) threads the bilayer. The Extracellular portion of the chain corresponds to 141-185 (PYRYDNTSPEDMPQDFKASLCLPTTSAPASAPSNGNCSSYTETQH). Asparagine 176 is a glycosylation site (N-linked (GlcNAc...) asparagine). Residues 186–215 (LSVVGIMFVAQTLLGVGGVPIQPFGISYID) traverse the membrane as a helical segment. Residues 216–234 (DFAHNSNSPLYLGILFAVT) are Cytoplasmic-facing. The helical transmembrane segment at 235–255 (MMGPGLAFGLGSLMLRLYVDI) threads the bilayer. Topologically, residues 256 to 273 (NQMPEGGISLTIKDPRWV) are extracellular. Residues 274–298 (GAWWLGFLIAAGAVALAAIPYFFFP) traverse the membrane as a helical segment. The Cytoplasmic segment spans residues 299-366 (KEMPKEKREL…IKVFPRVLLQ (68 aa)). The residue at position 318 (threonine 318) is a Phosphothreonine. The tract at residues 319 to 342 (DSPARKGKDSPSKQSPGESTKKQD) is disordered. Residue serine 320 is modified to Phosphoserine. Residues 367–388 (TLRHPIFLLVVLSQVCLSSMAA) traverse the membrane as a helical segment. Topologically, residues 389–408 (GMATFLPKFLERQFSITASY) are extracellular. Residues 409-432 (ANLLIGCLSFPSVIVGIVVGGVLV) traverse the membrane as a helical segment. At 433 to 436 (KRLH) the chain is on the cytoplasmic side. Residues 437-460 (LGPVGCGALCLLGMLLCLFFSLPL) form a helical membrane-spanning segment. Residues 461-564 (FFIGCSSHQI…STCSHLVVPF (104 aa)) are Extracellular-facing. The 61-residue stretch at 483 to 543 (LELSPSCMEA…VFYTNCSCVV (61 aa)) folds into the Kazal-like domain. 3 disulfide bridges follow: cysteine 489–cysteine 520, cysteine 495–cysteine 516, and cysteine 504–cysteine 541. Asparagine 538 carries an N-linked (GlcNAc...) asparagine glycan. A helical membrane pass occupies residues 565–587 (LLLVSLGSALACLTHTPSFMLIL). The Cytoplasmic segment spans residues 588-596 (RGVKKEDKT). The helical transmembrane segment at 597-622 (LAVGIQFMFLRILAWMPSPVIHGSAI) threads the bilayer. The Extracellular portion of the chain corresponds to 623 to 655 (DTTCVHWALSCGRRAVCRYYNNDLLRNRFIGLQ). The chain crosses the membrane as a helical span at residues 656–673 (FFFKTGSVICFALVLAVL). The Cytoplasmic portion of the chain corresponds to 674-709 (RQQDKEARTKESRSSPAVEQQLLVSGPGKKPEDSRV). The tract at residues 679-709 (EARTKESRSSPAVEQQLLVSGPGKKPEDSRV) is disordered.

This sequence belongs to the organo anion transporter (TC 2.A.60) family. As to expression, strongly expressed in the liver, at the sinusoidal membrane of the hepatocytes. Expressed in the kidney. Expressed in placental trophoblasts and syncytiotrophoblast. Expressed in the small intestine. Expressed in the blood-brain barrier, in endothelial cells of brain capillaries. Expressed in the retina, in the inner nuclear layer and the inner plexiform layer. Expressed in skelettal muscles. In testis, primarily localized to the basal membrane of Sertoli cells and weakly expressed within the tubules. Also expressed in pancreas, lung, heart, colon, ovary and spleen. Expressed in fetal brain, heart, kidney, liver, lung, skeletal muscle, spleen and pancreas. Highest expression in brain. Predominant isoform compared to isoform 3 in small intestine duodenum, kidney, placenta, and skeletal muscle. In terms of tissue distribution, predominant isoform compared to isoform 1 in liver. Also expressed in small intestine duodenum, kidney, brain, placenta, and skeletal muscle.

It is found in the cell membrane. It localises to the basal cell membrane. Its subcellular location is the basolateral cell membrane. The protein localises to the apical cell membrane. It catalyses the reaction dehydroepiandrosterone 3-sulfate(out) = dehydroepiandrosterone 3-sulfate(in). The catalysed reaction is estrone 3-sulfate(out) = estrone 3-sulfate(in). It carries out the reaction estrone 3-sulfate(out) + hydrogencarbonate(in) = estrone 3-sulfate(in) + hydrogencarbonate(out). The enzyme catalyses taurocholate(out) = taurocholate(in). It catalyses the reaction coproporphyrin III(out) = coproporphyrin III(in). The catalysed reaction is substance P(out) = substance P(in). It carries out the reaction pregnenolone sulfate(out) = pregnenolone sulfate(in). The enzyme catalyses prostaglandin E2(out) = prostaglandin E2(in). It catalyses the reaction prostaglandin D2(out) = prostaglandin D2(in). The catalysed reaction is L-thyroxine(out) = L-thyroxine(in). With respect to regulation, E1S, DHEA-S and PregS transports are regulated by steroid hormones. In the case of testosterone, transport of E1S and DHEA-S was inhibited, whereas progesterone stimulated E1S, DHEA-S and PregS uptake. Progesterone stimulates high-affinity uptake of E1S whereas it inhibits low-affinity uptake of E1S. Progesterone doesn't affect the uptake of PGE2. Functionally, mediates the Na(+)-independent transport of steroid sulfate conjugates and other specific organic anions. Responsible for the transport of estrone 3-sulfate (E1S) through the basal membrane of syncytiotrophoblast, highlighting a potential role in the placental absorption of fetal-derived sulfated steroids including the steroid hormone precursor dehydroepiandrosterone sulfate (DHEA-S). Also facilitates the uptake of sulfated steroids at the basal/sinusoidal membrane of hepatocytes, therefore accounting for the major part of organic anions clearance of liver. Mediates the intestinal uptake of sulfated steroids. Mediates the uptake of the neurosteroids DHEA-S and pregnenolone sulfate (PregS) into the endothelial cells of the blood-brain barrier as the first step to enter the brain. Also plays a role in the reuptake of neuropeptides such as substance P/TAC1 and vasoactive intestinal peptide/VIP released from retinal neurons. May act as a heme transporter that promotes cellular iron availability via heme oxygenase/HMOX2 and independently of TFRC. Also transports heme by-product coproporphyrin III (CPIII), and may be involved in their hepatic disposition. Mediates the uptake of other substrates such as prostaglandins D2 (PGD2), E1 (PGE1) and E2 (PGE2), taurocholate, L-thyroxine, leukotriene C4 and thromboxane B2. May contribute to regulate the transport of organic compounds in testis across the blood-testis-barrier. Shows a pH-sensitive substrate specificity which may be ascribed to the protonation state of the binding site and leads to a stimulation of substrate transport in an acidic microenvironment. The exact transport mechanism has not been yet deciphered but most likely involves an anion exchange, coupling the cellular uptake of organic substrate with the efflux of an anionic compound. Hydrogencarbonate/HCO3(-) acts as a probable counteranion that exchanges for organic anions. Cytoplasmic glutamate may also act as counteranion in the placenta. An inwardly directed proton gradient has also been proposed as the driving force of E1S uptake with a (H(+):E1S) stoichiometry of (1:1). Its function is as follows. Has estrone 3-sulfate (E1S) transport activity comparable with the full-length isoform 1. The polypeptide is Solute carrier organic anion transporter family member 2B1 (Homo sapiens (Human)).